Here is a 129-residue protein sequence, read N- to C-terminus: UPF0102 protein amb4503 (129 aa).

It belongs to the UPF0102 family.

This is UPF0102 protein amb4503 from Paramagnetospirillum magneticum (strain ATCC 700264 / AMB-1) (Magnetospirillum magneticum).